The following is a 78-amino-acid chain: Alpha-neurotoxin homolog 1 (78 aa).

The first 21 residues, Met-1 to Thr-21, serve as a signal peptide directing secretion. Disulfide bonds link Cys-24/Cys-42, Cys-37/Cys-57, Cys-59/Cys-70, and Cys-71/Cys-76.

This sequence belongs to the three-finger toxin family. Short-chain subfamily. Orphan group XII sub-subfamily. As to expression, expressed by the venom gland.

It is found in the secreted. This Micrurus corallinus (Brazilian coral snake) protein is Alpha-neurotoxin homolog 1.